We begin with the raw amino-acid sequence, 354 residues long: Phosphoribosylformylglycinamidine cyclo-ligase (354 aa).

The protein belongs to the AIR synthase family.

It is found in the cytoplasm. The catalysed reaction is 2-formamido-N(1)-(5-O-phospho-beta-D-ribosyl)acetamidine + ATP = 5-amino-1-(5-phospho-beta-D-ribosyl)imidazole + ADP + phosphate + H(+). The protein operates within purine metabolism; IMP biosynthesis via de novo pathway; 5-amino-1-(5-phospho-D-ribosyl)imidazole from N(2)-formyl-N(1)-(5-phospho-D-ribosyl)glycinamide: step 2/2. The protein is Phosphoribosylformylglycinamidine cyclo-ligase of Marinobacter nauticus (strain ATCC 700491 / DSM 11845 / VT8) (Marinobacter aquaeolei).